Here is a 161-residue protein sequence, read N- to C-terminus: Phosphopantetheine adenylyltransferase (161 aa).

Thr9 serves as a coordination point for substrate. ATP-binding positions include 9–10 (TF) and His17. 3 residues coordinate substrate: Lys41, Leu73, and Arg87. ATP-binding positions include 88 to 90 (GMR), Glu98, and 123 to 129 (WSYVSST).

Belongs to the bacterial CoaD family. Homohexamer. Requires Mg(2+) as cofactor.

It is found in the cytoplasm. It catalyses the reaction (R)-4'-phosphopantetheine + ATP + H(+) = 3'-dephospho-CoA + diphosphate. It participates in cofactor biosynthesis; coenzyme A biosynthesis; CoA from (R)-pantothenate: step 4/5. Functionally, reversibly transfers an adenylyl group from ATP to 4'-phosphopantetheine, yielding dephospho-CoA (dPCoA) and pyrophosphate. The protein is Phosphopantetheine adenylyltransferase of Actinobacillus succinogenes (strain ATCC 55618 / DSM 22257 / CCUG 43843 / 130Z).